A 127-amino-acid polypeptide reads, in one-letter code: Modulator protein MzrA (127 aa).

Residues Met-1–Gln-10 lie on the Cytoplasmic side of the membrane. The helical transmembrane segment at Leu-11–Val-31 threads the bilayer. At Arg-32 to Gly-127 the chain is on the periplasmic side.

It belongs to the MzrA family. As to quaternary structure, interacts with EnvZ.

The protein resides in the cell inner membrane. Modulates the activity of the EnvZ/OmpR two-component regulatory system, probably by directly modulating EnvZ enzymatic activity and increasing stability of phosphorylated OmpR. Links the two-component systems CpxA/CpxR and EnvZ/OmpR. The protein is Modulator protein MzrA of Escherichia coli (strain K12).